Reading from the N-terminus, the 1219-residue chain is ATP-dependent helicase/nuclease subunit A (1219 aa).

The UvrD-like helicase ATP-binding domain maps to 12–477 (TRWTDNQWKS…IDLSQNFRSR (466 aa)). 33–40 (AAAGSGKT) provides a ligand contact to ATP. One can recognise a UvrD-like helicase C-terminal domain in the interval 478 to 786 (EEVLTTTNYL…RMMTIHSSKG (309 aa)). The disordered stretch occupies residues 997 to 1016 (PSKQSVSELKRQHETEQSDT). The span at 1004–1016 (ELKRQHETEQSDT) shows a compositional bias: basic and acidic residues.

The protein belongs to the helicase family. AddA subfamily. As to quaternary structure, heterodimer of AddA and AddB/RexB. Requires Mg(2+) as cofactor.

It catalyses the reaction Couples ATP hydrolysis with the unwinding of duplex DNA by translocating in the 3'-5' direction.. The enzyme catalyses ATP + H2O = ADP + phosphate + H(+). The heterodimer acts as both an ATP-dependent DNA helicase and an ATP-dependent, dual-direction single-stranded exonuclease. Recognizes the chi site generating a DNA molecule suitable for the initiation of homologous recombination. The AddA nuclease domain is required for chi fragment generation; this subunit has the helicase and 3' -&gt; 5' nuclease activities. This Staphylococcus saprophyticus subsp. saprophyticus (strain ATCC 15305 / DSM 20229 / NCIMB 8711 / NCTC 7292 / S-41) protein is ATP-dependent helicase/nuclease subunit A.